The sequence spans 1129 residues: CRISPR-associated endonuclease Cas12b (1129 aa).

The WED-I (OBD-I) domain stretch occupies residues Met1–Asp14. The segment at Lys4–Lys9 is binds sgRNA. An REC1 (Helical-1)domain region spans residues Met15–Thr386. 2 binds DNA protospacer adjacent motif (PAM) on target DNA regions span residues Gln118 to Arg122 and Gly143 to Asn144. The WED-II (OBD-II) domain stretch occupies residues Ala387–Arg518. A binds sgRNA region spans residues Ser442–Gln446. A ruvC-I domain region spans residues Arg519–Ser628. The active-site For DNase activity of RuvC domain is Asp570. Residues Leu573–Arg574 form a binds non-target ssDNA region. The interval Lys629–Cys658 is bridge helix domain. An REC2 (Helical-II) domain region spans residues Gly659–Val784. Binds sgRNA stretches follow at residues Arg742–Arg746, Val753–Gly754, Arg792–Thr796, His800–Glu819, and Trp835–Tyr839. The tract at residues Ile785 to Arg900 is ruvC-II domain. Glu848 (for DNase activity of RuvC domain) is an active-site residue. The interval Phe897–Arg900 is binds non-target ssDNA. Ser899 and Arg911 together coordinate phosphate. The nuc-I domain stretch occupies residues Phe901–Ile974. The binds sgRNA stretch occupies residues Gln973–Leu978. The tract at residues His975–Asp993 is ruvC-III domain. Asp977 functions as the For DNase activity of RuvC domain in the catalytic mechanism. The segment at Ile994 to Ile1129 is nuc-II domain.

The protein belongs to the CRISPR-associated endonuclease Cas12b family. Monomer. The cofactor is a divalent metal cation.

CRISPR (clustered regularly interspaced short palindromic repeat), is an adaptive immune system that provides protection against mobile genetic elements (viruses, transposable elements and conjugative plasmids). CRISPR clusters contain sequences complementary to antecedent mobile elements and target invading nucleic acids. CRISPR clusters are transcribed and processed into CRISPR RNA (crRNA). In type II CRISPR systems correct processing of pre-crRNA requires a trans-encoded small RNA (tracrRNA), endogenous ribonuclease 3 (rnc) and this protein. The tracrRNA serves as a guide for ribonuclease 3-aided processing of pre-crRNA. Protein-crRNA-tracrRNA endonucleolytically cleave dsDNA target complementary to the spacer; protein is inactive in the absence of crRNA homologous to the target and tracrRNA. Recognizes a short motif in the CRISPR repeat sequences (the 5' PAM or protospacer adjacent motif, TTN in this organism) to help distinguish self versus nonself, as targets within the bacterial CRISPR locus do not have PAMs. PAM recognition is also required for catalytic activity. Cleavage results in staggered 6-8 base 5'-overhangs 14-17 and 23-24 bases downstream of the PAM (protospacer adjacent motif) on the non-target and target strands respectively. Both target and non-target strand DNA are probably independently cleaved in the same active site. The chain is CRISPR-associated endonuclease Cas12b from Alicyclobacillus acidoterrestris (strain ATCC 49025 / DSM 3922 / CIP 106132 / NCIMB 13137 / GD3B).